The primary structure comprises 276 residues: Undecaprenyl-diphosphatase (276 aa).

Transmembrane regions (helical) follow at residues 1-21, 39-59, 84-104, 115-135, 159-179, 190-210, 222-242, and 253-273; these read MSWL…FLPV, AGAS…LVYF, YRLG…GLLL, LWAI…AEYF, LALL…LFLG, FLLA…DAFA, QLLV…AWFL, and FVGY…TGVV.

Belongs to the UppP family.

It localises to the cell membrane. The enzyme catalyses di-trans,octa-cis-undecaprenyl diphosphate + H2O = di-trans,octa-cis-undecaprenyl phosphate + phosphate + H(+). Functionally, catalyzes the dephosphorylation of undecaprenyl diphosphate (UPP). Confers resistance to bacitracin. The sequence is that of Undecaprenyl-diphosphatase from Mycobacterium sp. (strain KMS).